Here is a 284-residue protein sequence, read N- to C-terminus: uncharacterized protein (284 aa).

It belongs to the AtsA family.

This is an uncharacterized protein from Mycobacterium leprae (strain TN).